A 432-amino-acid chain; its full sequence is Pachytene checkpoint protein 2 homolog (432 aa).

Position 1 is an N-acetylmethionine (M1). ATP is bound at residue G179–T186.

The protein belongs to the AAA ATPase family. PCH2 subfamily. Specifically interacts with the ligand binding domain of the thyroid receptor (TR). This interaction does not require the presence of thyroid hormone for its interaction. Interacts with proteasome subunit PSMA8; to participate in meiosis progression during spermatogenesis. In terms of tissue distribution, widely expressed, including in testis.

In terms of biological role, plays a key role in chromosome recombination and chromosome structure development during meiosis. Required at early steps in meiotic recombination that leads to non-crossovers pathways. Also needed for efficient completion of homologous synapsis by influencing crossover distribution along the chromosomes affecting both crossovers and non-crossovers pathways. Also required for development of higher-order chromosome structures and is needed for synaptonemal-complex formation. In males, required for efficient synapsis of the sex chromosomes and for sex body formation. Promotes early steps of the DNA double-strand breaks (DSBs) repair process upstream of the assembly of RAD51 complexes. Required for depletion of HORMAD1 and HORMAD2 from synapsed chromosomes. Plays a role in mitotic spindle assembly checkpoint (SAC) activation. The chain is Pachytene checkpoint protein 2 homolog (Trip13) from Mus musculus (Mouse).